The chain runs to 225 residues: Glutathione S-transferase U2 (225 aa).

The 80-residue stretch at Glu6–Pro85 folds into the GST N-terminal domain. Residues Ser16–Pro17, Lys42–Lys43, Lys56–Val57, and Glu69–Ser70 contribute to the glutathione site. Residues Asp90 to Ile217 enclose the GST C-terminal domain. A Phosphothreonine modification is found at Thr151.

The protein belongs to the GST superfamily. Tau family.

Its subcellular location is the cytoplasm. It localises to the cytosol. The enzyme catalyses RX + glutathione = an S-substituted glutathione + a halide anion + H(+). Functionally, may be involved in the conjugation of reduced glutathione to a wide number of exogenous and endogenous hydrophobic electrophiles and have a detoxification role against certain herbicides. The sequence is that of Glutathione S-transferase U2 (GSTU2) from Arabidopsis thaliana (Mouse-ear cress).